A 205-amino-acid chain; its full sequence is Urease accessory protein UreG (205 aa).

10–17 (GPVGAGKT) contributes to the GTP binding site.

This sequence belongs to the SIMIBI class G3E GTPase family. UreG subfamily. Homodimer. UreD, UreF and UreG form a complex that acts as a GTP-hydrolysis-dependent molecular chaperone, activating the urease apoprotein by helping to assemble the nickel containing metallocenter of UreC. The UreE protein probably delivers the nickel.

The protein resides in the cytoplasm. In terms of biological role, facilitates the functional incorporation of the urease nickel metallocenter. This process requires GTP hydrolysis, probably effectuated by UreG. This chain is Urease accessory protein UreG, found in Corynebacterium glutamicum (strain R).